The chain runs to 691 residues: tRNA-dihydrouridine(47) synthase [NAD(P)(+)]-like (691 aa).

Ser2 is modified (N-acetylserine). The interval 55 to 94 (PPPPSRSVKQNDAADVRAPQSGLVQEKKSKRQLKRERREQ) is disordered. C3H1-type zinc fingers lie at residues 94-125 (QSTI…HDIE) and 138-163 (QCPF…HRDI). Residues 259–286 (LETEEVRPMKKAKSEDQKNSKTGDVGGV) are disordered. Positions 262–279 (EEVRPMKKAKSEDQKNSK) are enriched in basic and acidic residues. FMN is bound by residues 344–346 (PLT) and Gln398. Cys429 acts as the Proton donor in catalysis. FMN contacts are provided by residues Lys468, His498, 531 to 533 (NGD), and 556 to 557 (AR).

The protein belongs to the Dus family. Dus3 subfamily. FMN serves as cofactor.

It carries out the reaction 5,6-dihydrouridine(47) in tRNA + NAD(+) = uridine(47) in tRNA + NADH + H(+). The catalysed reaction is 5,6-dihydrouridine(47) in tRNA + NADP(+) = uridine(47) in tRNA + NADPH + H(+). It catalyses the reaction a 5,6-dihydrouridine in mRNA + NAD(+) = a uridine in mRNA + NADH + H(+). The enzyme catalyses a 5,6-dihydrouridine in mRNA + NADP(+) = a uridine in mRNA + NADPH + H(+). Its function is as follows. Catalyzes the synthesis of dihydrouridine, a modified base found in the D-loop of most tRNAs. Specifically modifies U47 in cytoplasmic tRNAs. Catalyzes the synthesis of dihydrouridine in some mRNAs, thereby affecting their translation. The polypeptide is tRNA-dihydrouridine(47) synthase [NAD(P)(+)]-like (Arabidopsis thaliana (Mouse-ear cress)).